We begin with the raw amino-acid sequence, 103 residues long: Large ribosomal subunit protein bL21 (103 aa).

It belongs to the bacterial ribosomal protein bL21 family. Part of the 50S ribosomal subunit. Contacts protein L20.

Its function is as follows. This protein binds to 23S rRNA in the presence of protein L20. In Pasteurella multocida (strain Pm70), this protein is Large ribosomal subunit protein bL21.